The primary structure comprises 309 residues: Methionyl-tRNA formyltransferase (309 aa).

Residue 112-115 participates in (6S)-5,6,7,8-tetrahydrofolate binding; the sequence is SLLP.

It belongs to the Fmt family.

The catalysed reaction is L-methionyl-tRNA(fMet) + (6R)-10-formyltetrahydrofolate = N-formyl-L-methionyl-tRNA(fMet) + (6S)-5,6,7,8-tetrahydrofolate + H(+). Functionally, attaches a formyl group to the free amino group of methionyl-tRNA(fMet). The formyl group appears to play a dual role in the initiator identity of N-formylmethionyl-tRNA by promoting its recognition by IF2 and preventing the misappropriation of this tRNA by the elongation apparatus. The sequence is that of Methionyl-tRNA formyltransferase from Bartonella tribocorum (strain CIP 105476 / IBS 506).